We begin with the raw amino-acid sequence, 267 residues long: Undecaprenyl-diphosphatase (267 aa).

8 helical membrane passes run 1-21, 39-59, 83-103, 111-131, 149-169, 189-209, 218-238, and 246-266; these read MTYFEAFFLALLQGFTEFLPI, QGLAFDVAVHVGTLAAVVIYF, SNLAWLIVLATIPAALFGLLF, LRSAWVIAATTIVFGLLLWWV, ALFLGIAQAMAMIPGTSRSGI, FLMSIPIITLAGSYLGLKLAM, LLSTGVIVSFISAYICIHFFL, and MMPFVIYRILLGSSLLVWLAL.

Belongs to the UppP family.

It localises to the cell inner membrane. It catalyses the reaction di-trans,octa-cis-undecaprenyl diphosphate + H2O = di-trans,octa-cis-undecaprenyl phosphate + phosphate + H(+). Its function is as follows. Catalyzes the dephosphorylation of undecaprenyl diphosphate (UPP). Confers resistance to bacitracin. This is Undecaprenyl-diphosphatase from Aliivibrio fischeri (strain MJ11) (Vibrio fischeri).